Here is a 506-residue protein sequence, read N- to C-terminus: UDP-N-acetylglucosamine--peptide N-acetylglucosaminyltransferase GtfA subunit (506 aa).

Residue 16-19 (GVEY) coordinates UDP. His241 serves as a coordination point for N-acetyl-D-glucosamine. Residue 384–385 (HK) participates in UDP binding. 404-407 (EGFG) lines the N-acetyl-D-glucosamine pocket.

Belongs to the glycosyltransferase group 1 family. Glycosyltransferase 4 subfamily. Interacts with stabilizing protein GtfB (Gtf2), probably as a heterotetramer with 2 subunits each of GtfA and GtfB, part of the accessory SecA2/SecY2 protein translocation apparatus.

The protein resides in the cytoplasm. The protein localises to the cell membrane. The catalysed reaction is L-seryl-[protein] + UDP-N-acetyl-alpha-D-glucosamine = 3-O-[N-acetyl-alpha-D-glucosaminyl]-L-seryl-[protein] + UDP + H(+). The protein operates within protein modification; protein glycosylation. Required for polymorphic O-glycosylation of the serine-rich repeat protein Srr2. Catalyzes the first step in glycosylation by transferring N-acetylglucosamine from UDP-GlcNAc to serine residues of Srr2. Part of the accessory SecA2/SecY2 system specifically required to export serine-rich repeat proteins, probably Srr2 in this organism. The GtfA-GtfB (Gtf1-Gtf2 in this bacteria) complex adds GlcNAc from UDP-GlcNAc to Srr2 substrate. This subunit has low glycosyltransferase activity; GtfB enhances glycosyltransferase activity in vitro. Upon expression in S.parasanguis GtfA/GtfB restores expression of serine-rich repeat protein Fap1 and complements a biofilm formation defect. In Streptococcus agalactiae, this protein is UDP-N-acetylglucosamine--peptide N-acetylglucosaminyltransferase GtfA subunit.